Reading from the N-terminus, the 379-residue chain is UPF0754 membrane protein ABC1518 (379 aa).

2 helical membrane passes run 1–21 (MHWIWLVLLLAVVGAIVGAAT) and 358–378 (LLGGLIGGIVGLIQAVIVHFF).

This sequence belongs to the UPF0754 family.

It is found in the cell membrane. The sequence is that of UPF0754 membrane protein ABC1518 from Shouchella clausii (strain KSM-K16) (Alkalihalobacillus clausii).